The sequence spans 236 residues: Sugar fermentation stimulation protein homolog (236 aa).

It belongs to the SfsA family.

The sequence is that of Sugar fermentation stimulation protein homolog from Methylobacterium nodulans (strain LMG 21967 / CNCM I-2342 / ORS 2060).